A 128-amino-acid chain; its full sequence is Small ribosomal subunit protein uS9 (128 aa).

Belongs to the universal ribosomal protein uS9 family.

This Flavobacterium psychrophilum (strain ATCC 49511 / DSM 21280 / CIP 103535 / JIP02/86) protein is Small ribosomal subunit protein uS9.